A 371-amino-acid polypeptide reads, in one-letter code: Chaperone protein DnaJ (371 aa).

The region spanning 5-69 (DYYEVLGLSK…QKRAQYDQFG (65 aa)) is the J domain. The CR-type zinc finger occupies 133–215 (GKELNVEIPV…CHGSGKVRKR (83 aa)). 8 residues coordinate Zn(2+): cysteine 146, cysteine 149, cysteine 163, cysteine 166, cysteine 189, cysteine 192, cysteine 203, and cysteine 206. CXXCXGXG motif repeat units follow at residues 146 to 153 (CDTCKGSG), 163 to 170 (CKHCSGSG), 189 to 196 (CSHCSGTG), and 203 to 210 (CTTCHGSG).

This sequence belongs to the DnaJ family. As to quaternary structure, homodimer. Zn(2+) serves as cofactor.

The protein localises to the cytoplasm. Its function is as follows. Participates actively in the response to hyperosmotic and heat shock by preventing the aggregation of stress-denatured proteins and by disaggregating proteins, also in an autonomous, DnaK-independent fashion. Unfolded proteins bind initially to DnaJ; upon interaction with the DnaJ-bound protein, DnaK hydrolyzes its bound ATP, resulting in the formation of a stable complex. GrpE releases ADP from DnaK; ATP binding to DnaK triggers the release of the substrate protein, thus completing the reaction cycle. Several rounds of ATP-dependent interactions between DnaJ, DnaK and GrpE are required for fully efficient folding. Also involved, together with DnaK and GrpE, in the DNA replication of plasmids through activation of initiation proteins. The protein is Chaperone protein DnaJ of Bacillus cereus (strain AH820).